A 449-amino-acid polypeptide reads, in one-letter code: Glucose-6-phosphate isomerase (449 aa).

Catalysis depends on Glu290, which acts as the Proton donor. Catalysis depends on residues His311 and Lys425.

This sequence belongs to the GPI family.

It localises to the cytoplasm. It carries out the reaction alpha-D-glucose 6-phosphate = beta-D-fructose 6-phosphate. The protein operates within carbohydrate biosynthesis; gluconeogenesis. It participates in carbohydrate degradation; glycolysis; D-glyceraldehyde 3-phosphate and glycerone phosphate from D-glucose: step 2/4. Functionally, catalyzes the reversible isomerization of glucose-6-phosphate to fructose-6-phosphate. This chain is Glucose-6-phosphate isomerase, found in Exiguobacterium sibiricum (strain DSM 17290 / CCUG 55495 / CIP 109462 / JCM 13490 / 255-15).